Reading from the N-terminus, the 447-residue chain is Trimethylamine monooxygenase (447 aa).

FAD-binding residues include serine 13, glutamate 38, glutamine 40, leucine 46, tryptophan 47, and histidine 63. NADP(+)-binding residues include tryptophan 71 and asparagine 73. The FAD site is built by asparagine 73 and valine 126. Residues tyrosine 173, alanine 205, serine 206, serine 208, and arginine 229 each coordinate NADP(+). FAD contacts are provided by glutamine 318 and threonine 321. Arginine 413 is a binding site for NADP(+).

It belongs to the FMO family. The cofactor is FAD.

The enzyme catalyses trimethylamine + NADPH + O2 = trimethylamine N-oxide + NADP(+) + H2O. In terms of biological role, catalyzes the oxidation of trimethylamine (TMA) to produce trimethylamine N-oxide (TMAO). TMA is the best substrate, but the enzyme can also oxidize methimazole, indole and dimethylamine (DMA). The polypeptide is Trimethylamine monooxygenase (Roseovarius nubinhibens (strain ATCC BAA-591 / DSM 15170 / ISM)).